A 160-amino-acid polypeptide reads, in one-letter code: MTGKTHIMGGIASCTAAAYYYGFDPVLMAASGAVGALIPDICHTQSKIGRKFPILSKVVSSVFGHRTFTHSLLFMLIMFFITSTYIPDKNISAGLMIGMASHLILDAWTVNGIKLLFPSTIRVRLPLYMKTGSFSEQLVLAGLTLASCYYFYMLFHGRMF.

An N-terminal signal peptide occupies residues 1-29 (MTGKTHIMGGIASCTAAAYYYGFDPVLMA). Transmembrane regions (helical) follow at residues 67–87 (TFTH…TYIP) and 137–157 (QLVL…LFHG).

The protein to E.coli YdjM.

Its subcellular location is the cell membrane. This is an uncharacterized protein from Bacillus subtilis (strain 168).